The primary structure comprises 768 residues: Post-transcriptional regulator MKT1 (768 aa).

It belongs to the XPG/RAD2 endonuclease family. As to quaternary structure, interacts with PBP1.

The protein localises to the cytoplasm. The protein resides in the cytosol. In terms of biological role, involved in 3'-UTR mediated RNA regulation. Complexes with PBP1 to promote mRNA interactions with poly(A)-binding protein. The protein is Post-transcriptional regulator MKT1 of Cryptococcus neoformans var. grubii serotype A (strain H99 / ATCC 208821 / CBS 10515 / FGSC 9487) (Filobasidiella neoformans var. grubii).